Here is a 313-residue protein sequence, read N- to C-terminus: MEEYKEIMQNKKGKVDVTPIANFFREEVKQQITKNCWKPRVVAFLTSDDQGAIDYSKWTKLACQKDGIEFILKRVERVDLEDLIIEANNDSCVHGILVYYPVFGGMMDSYLQDVVSPTKDIEGLSTQNRFNLYHNIRFMDGETATKKCVIPCTPLAMVKIIDNLGIYDKSLAMGEHLKGKTVTIVNRSEIVGRPLAAMLANDGAIVYSIDINGIIIFQSGKRHGTIKMSETNVTREEAISKSDILILGVPSPNYKVNSDLIQDGTIVINFAGCLNVDESIQEKSILVPTIGKVTIAMLERNLLRLFNNQISNK.

Cys-152 is an active-site residue. NAD(+) is bound by residues 187 to 188 (RS), 210 to 211 (DI), and 270 to 272 (FAG).

This sequence belongs to the tetrahydrofolate dehydrogenase/cyclohydrolase family. In terms of assembly, homodimer.

The enzyme catalyses (6R)-5,10-methylene-5,6,7,8-tetrahydrofolate + NAD(+) = (6R)-5,10-methenyltetrahydrofolate + NADH. Its pathway is one-carbon metabolism; tetrahydrofolate interconversion. Functionally, catalyzes oxidation of cytoplasmic one-carbon units for purine biosynthesis. The chain is Methylenetetrahydrofolate dehydrogenase [NAD(+)] (thfA) from Dictyostelium discoideum (Social amoeba).